We begin with the raw amino-acid sequence, 247 residues long: 5'-nucleotidase SurE (247 aa).

The a divalent metal cation site is built by aspartate 8, aspartate 9, serine 39, and asparagine 91.

This sequence belongs to the SurE nucleotidase family. A divalent metal cation is required as a cofactor.

It localises to the cytoplasm. It catalyses the reaction a ribonucleoside 5'-phosphate + H2O = a ribonucleoside + phosphate. Its function is as follows. Nucleotidase that shows phosphatase activity on nucleoside 5'-monophosphates. In Azoarcus sp. (strain BH72), this protein is 5'-nucleotidase SurE.